Reading from the N-terminus, the 78-residue chain is Large ribosomal subunit protein bL28 (78 aa).

The protein belongs to the bacterial ribosomal protein bL28 family.

The polypeptide is Large ribosomal subunit protein bL28 (Prochlorococcus marinus (strain MIT 9301)).